We begin with the raw amino-acid sequence, 266 residues long: 5'-nucleotidase SurE (266 aa).

Residues aspartate 8, aspartate 9, serine 42, and asparagine 98 each contribute to the a divalent metal cation site.

It belongs to the SurE nucleotidase family. A divalent metal cation serves as cofactor.

Its subcellular location is the cytoplasm. The catalysed reaction is a ribonucleoside 5'-phosphate + H2O = a ribonucleoside + phosphate. In terms of biological role, nucleotidase that shows phosphatase activity on nucleoside 5'-monophosphates. This Methanocaldococcus jannaschii (strain ATCC 43067 / DSM 2661 / JAL-1 / JCM 10045 / NBRC 100440) (Methanococcus jannaschii) protein is 5'-nucleotidase SurE.